A 389-amino-acid polypeptide reads, in one-letter code: Large envelope protein (389 aa).

At Met1 the chain carries N-acetylmethionine. Gly2 carries the N-myristoyl glycine; by host lipid modification. A pre-S1 region spans residues 2 to 108 (GQNLSTSNPL…PPLRNTHPQA (107 aa)). The tract at residues 2–163 (GQNLSTSNPL…FSRIGDPALN (162 aa)) is pre-S. Over 2 to 170 (GQNLSTSNPL…ALNMENITSG (169 aa)) the chain is Virion surface; in external conformation. At 2-242 (GQNLSTSNPL…PGYRWMCLRR (241 aa)) the chain is on the intravirion; in internal conformation side. The interval 76–103 (TLPANPPPASTNRQSGRQPTPLSPPLRN) is disordered. Residues 85–95 (STNRQSGRQPT) are compositionally biased toward polar residues. Positions 109-163 (MQWNSTTFHQTLQDPRVRGLYLPAGGSSSGTVNPVPTTVSPISSIFSRIGDPALN) are pre-S2. Residues 171-191 (FLGPLLVLQAGFFLLTKILTI) traverse the membrane as a helical segment. At 192-242 (PKSLDSWWTSLNFLGGTTVCLGQNSQSPTSNHSPTSCPPTCPGYRWMCLRR) the chain is on the intravirion; in external conformation side. The chain crosses the membrane as a helical span at residues 243–263 (FIIFLFILLLCLIFLLVLLDY). Residues 264–337 (QGMLPVCPLI…WASARFSWLS (74 aa)) lie on the Virion surface side of the membrane. An N-linked (GlcNAc...) asparagine; by host glycan is attached at Asn309. The helical transmembrane segment at 338–358 (LLVPFVQWFVGLSPTVWLLVI) threads the bilayer. Residues 359–364 (WMMWYW) are Intravirion-facing. The chain crosses the membrane as a helical span at residues 365-387 (GPKLFTILSPFLPLLPIFFCLWV). At 388–389 (YI) the chain is on the virion surface side.

It belongs to the orthohepadnavirus major surface antigen family. As to quaternary structure, in its internal form (Li-HBsAg), interacts with the capsid protein and with the isoform S. Interacts with host chaperone CANX. In terms of assembly, associates with host chaperone CANX through its pre-S2 N glycan; this association may be essential for isoform M proper secretion. Interacts with isoform L. Interacts with the antigens of satellite virus HDV (HDVAgs); this interaction is required for encapsidation of HDV genomic RNA. In terms of processing, isoform M is N-terminally acetylated by host at a ratio of 90%, and N-glycosylated by host at the pre-S2 region. Myristoylated.

It localises to the virion membrane. Functionally, the large envelope protein exists in two topological conformations, one which is termed 'external' or Le-HBsAg and the other 'internal' or Li-HBsAg. In its external conformation the protein attaches the virus to cell receptors and thereby initiating infection. This interaction determines the species specificity and liver tropism. This attachment induces virion internalization predominantly through caveolin-mediated endocytosis. The large envelope protein also assures fusion between virion membrane and endosomal membrane. In its internal conformation the protein plays a role in virion morphogenesis and mediates the contact with the nucleocapsid like a matrix protein. Its function is as follows. The middle envelope protein plays an important role in the budding of the virion. It is involved in the induction of budding in a nucleocapsid independent way. In this process the majority of envelope proteins bud to form subviral lipoprotein particles of 22 nm of diameter that do not contain a nucleocapsid. The sequence is that of Large envelope protein from Homo sapiens (Human).